The chain runs to 1123 residues: Polyprotein of EF-Ts, chloroplastic (1123 aa).

A chloroplast-targeting transit peptide spans 1 to 73 (MTPVVHCSVG…SSARRPRTLS (73 aa)). Residues 68-141 (RPRTLSAATV…MPPLNDEDLV (74 aa)) are disordered. Residues 94–103 (TSEESSEDTA) show a composition bias toward acidic residues. Low complexity predominate over residues 106–119 (TAEASEQAEASTSS). Residues 143-212 (GASFTGKVRS…ETGRISLTMR (70 aa)) form the S1 motif 1 domain. Positions 213-258 (TGGDYVKPKTETPKAASGGRNTTATTSRGSPRQTRERDEAKSMGET) are disordered. Residues 231-244 (GRNTTATTSRGSPR) show a composition bias toward polar residues. Over residues 245–254 (QTRERDEAKS) the composition is skewed to basic and acidic residues. The S1 motif 2 domain occupies 263–331 (GQFLDGVVKN…VRGQVTLTMK (69 aa)). Disordered regions lie at residues 443–670 (KTES…SEKT) and 894–923 (VAAQ…EEKK). Over residues 486-501 (EGSVTTEPTEAASTEF) the composition is skewed to polar residues. A compositionally biased stretch (low complexity) spans 551 to 587 (SVASTESVTAVVEESAPVSSVAIEVPAPEASEASAQE). Over residues 630–639 (KPDEPEESLI) the composition is skewed to acidic residues. Low complexity-rich tracts occupy residues 657 to 670 (AAVP…SEKT) and 894 to 903 (VAAQTAAKAP). The segment covering 908–923 (PKDDKPEETAETEEKK) has biased composition (basic and acidic residues).

Belongs to the EF-Ts family. Component of the chloroplast ribosome 30S and 70S subunits, as well as polysomes. As to quaternary structure, component of the chloroplast ribosome 70S subunit, and at low levels, present in polysomes. In terms of assembly, associates transiently with chloroplast polysomes.

The protein resides in the plastid. Its subcellular location is the chloroplast. Its function is as follows. Associates with the EF-Tu.GDP complex and induces the exchange of GDP to GTP. It remains bound to the aminoacyl-tRNA.EF-Tu.GTP complex up to the GTP hydrolysis stage on the ribosome. Functionally, binds to psbD and psbA 5'-untranslated regions (UTRs) in vitro. The chain is Polyprotein of EF-Ts, chloroplastic from Oryza sativa subsp. indica (Rice).